The chain runs to 435 residues: Elongation factor 1-alpha (435 aa).

One can recognise a tr-type G domain in the interval 6–231; the sequence is KVHINLVVIG…DALEPPKRPV (226 aa). Residues 15–22 are G1; it reads GHVDSGKS. Position 15–22 (15–22) interacts with GTP; the sequence is GHVDSGKS. Residues 71–75 form a G2 region; it reads GITID. The interval 92–95 is G3; that stretch reads DAPG. GTP-binding positions include 92–96 and 154–157; these read DAPGH and NKMD. The interval 154–157 is G4; the sequence is NKMD. Residues 195-197 are G5; the sequence is SGF.

This sequence belongs to the TRAFAC class translation factor GTPase superfamily. Classic translation factor GTPase family. EF-Tu/EF-1A subfamily.

It localises to the cytoplasm. This protein promotes the GTP-dependent binding of aminoacyl-tRNA to the A-site of ribosomes during protein biosynthesis. The chain is Elongation factor 1-alpha from Tetrahymena pyriformis.